Reading from the N-terminus, the 726-residue chain is Cyclic nucleotide-gated ion channel 2 (726 aa).

Residues 1–127 (MPSHPNFIFR…SKRVQRWNRA (127 aa)) lie on the Cytoplasmic side of the membrane. Residues 26 to 46 (IDENSNLQINGGDSSSSGSDE) are disordered. Over residues 36-45 (GGDSSSSGSD) the composition is skewed to low complexity. The helical transmembrane segment at 128–148 (LLLARGMALAVDPLFFYALSI) threads the bilayer. Residues 149-162 (GRTTGPACLYMDGA) lie on the Extracellular side of the membrane. The helical transmembrane segment at 163-183 (FAAVVTVLRTCLDAVHLWHVW) threads the bilayer. The Cytoplasmic segment spans residues 184-219 (LQFRLAYVSRESLVVGCGKLVWDPRAIASHYARSLT). The chain crosses the membrane as a helical span at residues 220-240 (GFWFDVIVILPVPQAVFWLVV). Residues 241–254 (PKLIREEKVKLIMT) are Extracellular-facing. The chain crosses the membrane as a helical span at residues 255-275 (ILLLIFLFQFLPKIYHCICLM). The Cytoplasmic portion of the chain corresponds to 276–282 (RRMQKVT). Residues 283–303 (GYIFGTIWWGFALNLIAYFIA) traverse the membrane as a helical segment. The Extracellular segment spans residues 304 to 424 (SHVAGGCWYV…ANDLEPTSNW (121 aa)). Residues 425–445 (LEVIFSIVMVLSGLLLFTLLI) traverse the membrane as a helical segment. The Cytoplasmic portion of the chain corresponds to 446-726 (GNIQVFLHAV…MSIRPHDHLE (281 aa)). Residues 531–661 (LFRG…ARYY) and Asp600 each bind a nucleoside 3',5'-cyclic phosphate. Residues 645–661 (FRYKFANERLKRTARYY) are calmodulin-binding. Residues 666-695 (RTWAAVNIQMAWRRRRKRTRGENIGGSMSP) enclose the IQ domain.

It belongs to the cyclic nucleotide-gated cation channel (TC 1.A.1.5) family. In terms of assembly, homotetramer or heterotetramer (Potential). Binds calmodulin-1/4 with a higher affinity than calmodulin-2/3/5. Expressed in the whole plant but only weakly in roots. Strongly expressed in the expanded cotyledons of 14-day-old seedlings and detected later in leaves after the transition to flowering. Also detected in flowers during organ senescence and in the dehiscence zone of siliques.

The protein resides in the cell membrane. Acts as a cyclic nucleotide-gated ion channel. Permeable to potassium and calcium in a cyclic nucleotide-dependent fashion (cAMP or cGMP). Could also transport lithium, cesium and rubium and displays a strong selectivity against sodium. Seems to directly participate in pathogen-induced calcium influx. May function in homeostasis, re-establishing ionic balance after defense action and/or other stimuli. Could mediate the initiation of the developmentally regulated cell death programs. The protein is Cyclic nucleotide-gated ion channel 2 (CNGC2) of Arabidopsis thaliana (Mouse-ear cress).